A 90-amino-acid chain; its full sequence is Protein LURE 1.5 (90 aa).

A signal peptide spans 1 to 19; the sequence is MKLPIIFLTLLIFVSSCTS. 2 disulfides stabilise this stretch: cysteine 58-cysteine 75 and cysteine 61-cysteine 82.

It belongs to the DEFL family. Expressed in the pistil. Detected exclusively in the synergid cells.

It is found in the secreted. Inactive pollen tube attractants guiding pollen tubes to the ovular micropyle. This Arabidopsis thaliana (Mouse-ear cress) protein is Protein LURE 1.5.